A 471-amino-acid chain; its full sequence is Alpha-galactosidase 2 (471 aa).

The signal sequence occupies residues 1–18 (MFAFYFLTACISLKGVFG). An intrachain disulfide couples C42 to C74. Substrate contacts are provided by D72 and D73. The N-linked (GlcNAc...) asparagine glycan is linked to N105. Residues C121 and C151 are joined by a disulfide bond. K147 provides a ligand contact to substrate. The active-site Nucleophile is D149. N175 is a glycosylation site (N-linked (GlcNAc...) asparagine). Residue R205 participates in substrate binding. D209 serves as the catalytic Proton donor. Disulfide bonds link C221–C237 and C223–C230. Q251 contacts substrate. Residues N270, N370, N403, N413, N422, N435, and N454 are each glycosylated (N-linked (GlcNAc...) asparagine).

It belongs to the glycosyl hydrolase 27 family. In terms of assembly, homotetramer.

It localises to the secreted. The catalysed reaction is Hydrolysis of terminal, non-reducing alpha-D-galactose residues in alpha-D-galactosides, including galactose oligosaccharides, galactomannans and galactolipids.. This is Alpha-galactosidase 2 (MEL2) from Saccharomyces cerevisiae (Baker's yeast).